The sequence spans 349 residues: tRNA N6-adenosine threonylcarbamoyltransferase (349 aa).

His118 and His122 together coordinate Fe cation. Residues 141–145 (LVSGG), Asp174, Gly187, and Asn280 each bind substrate. Position 308 (Asp308) interacts with Fe cation.

Belongs to the KAE1 / TsaD family. Requires Fe(2+) as cofactor.

The protein localises to the cytoplasm. The enzyme catalyses L-threonylcarbamoyladenylate + adenosine(37) in tRNA = N(6)-L-threonylcarbamoyladenosine(37) in tRNA + AMP + H(+). Required for the formation of a threonylcarbamoyl group on adenosine at position 37 (t(6)A37) in tRNAs that read codons beginning with adenine. Is involved in the transfer of the threonylcarbamoyl moiety of threonylcarbamoyl-AMP (TC-AMP) to the N6 group of A37, together with TsaE and TsaB. TsaD likely plays a direct catalytic role in this reaction. In Acidovorax sp. (strain JS42), this protein is tRNA N6-adenosine threonylcarbamoyltransferase.